An 872-amino-acid polypeptide reads, in one-letter code: Alanine--tRNA ligase (872 aa).

Zn(2+) is bound by residues His-567, His-571, Cys-669, and His-673.

It belongs to the class-II aminoacyl-tRNA synthetase family. Zn(2+) serves as cofactor.

The protein resides in the cytoplasm. It catalyses the reaction tRNA(Ala) + L-alanine + ATP = L-alanyl-tRNA(Ala) + AMP + diphosphate. Functionally, catalyzes the attachment of alanine to tRNA(Ala) in a two-step reaction: alanine is first activated by ATP to form Ala-AMP and then transferred to the acceptor end of tRNA(Ala). Also edits incorrectly charged Ser-tRNA(Ala) and Gly-tRNA(Ala) via its editing domain. This chain is Alanine--tRNA ligase, found in Streptococcus thermophilus (strain ATCC BAA-491 / LMD-9).